A 110-amino-acid polypeptide reads, in one-letter code: Large ribosomal subunit protein P2B (110 aa).

Serine 29 bears the Phosphoserine mark. Lysine 49 participates in a covalent cross-link: Glycyl lysine isopeptide (Lys-Gly) (interchain with G-Cter in ubiquitin). A disordered region spans residues 66-110 (VPTGGASSAAAGAAGAAAGGDAAEEEKEEEAKEESDDDMGFGLFD). Positions 69–86 (GGASSAAAGAAGAAAGGD) are enriched in low complexity. The segment covering 87 to 104 (AAEEEKEEEAKEESDDDM) has biased composition (acidic residues). Serine 100 carries the phosphoserine modification.

This sequence belongs to the eukaryotic ribosomal protein P1/P2 family. In terms of assembly, component of the large ribosomal subunit (LSU). Mature yeast ribosomes consist of a small (40S) and a large (60S) subunit. The 40S small subunit contains 1 molecule of ribosomal RNA (18S rRNA) and 33 different proteins (encoded by 57 genes). The large 60S subunit contains 3 rRNA molecules (25S, 5.8S and 5S rRNA) and 46 different proteins (encoded by 81 genes). The 5 acidic ribosomal P-proteins form the stalk structure of the 60S subunit. They are organized as a pentameric complex in which uL10/P0 interacts with 2 heterodimers, P1A-P2B and P1B-P2A. Post-translationally, the N-terminus is not modified.

The protein resides in the cytoplasm. In terms of biological role, component of the ribosome, a large ribonucleoprotein complex responsible for the synthesis of proteins in the cell. The small ribosomal subunit (SSU) binds messenger RNAs (mRNAs) and translates the encoded message by selecting cognate aminoacyl-transfer RNA (tRNA) molecules. The large subunit (LSU) contains the ribosomal catalytic site termed the peptidyl transferase center (PTC), which catalyzes the formation of peptide bonds, thereby polymerizing the amino acids delivered by tRNAs into a polypeptide chain. The nascent polypeptides leave the ribosome through a tunnel in the LSU and interact with protein factors that function in enzymatic processing, targeting, and the membrane insertion of nascent chains at the exit of the ribosomal tunnel. This chain is Large ribosomal subunit protein P2B, found in Saccharomyces cerevisiae (strain ATCC 204508 / S288c) (Baker's yeast).